The chain runs to 116 residues: Non-specific lipid transfer protein GPI-anchored 17 (116 aa).

The signal sequence occupies residues 1 to 24 (MKIGVVLVLLTVFVVVMSSTSVSA). 3 disulfide bridges follow: cysteine 31/cysteine 74, cysteine 42/cysteine 58, and cysteine 59/cysteine 99. Asparagine 107 carries GPI-anchor amidated asparagine lipidation. The propeptide at 108–116 (GKNFKNTSL) is removed in mature form. A glycan (N-linked (GlcNAc...) asparagine) is linked at asparagine 113.

Belongs to the plant LTP family. In terms of tissue distribution, expressed in seedlings, preferentially in roots.

Its subcellular location is the cell membrane. In terms of biological role, probable lipid transfer protein. This Arabidopsis thaliana (Mouse-ear cress) protein is Non-specific lipid transfer protein GPI-anchored 17.